The primary structure comprises 254 residues: Alcohol dehydrogenase (254 aa).

10–33 (FVAGLGGIGLDTSREIVKSGPKNL) is an NAD(+) binding site. Position 138 (Ser138) interacts with substrate. Tyr151 serves as the catalytic Proton acceptor.

This sequence belongs to the short-chain dehydrogenases/reductases (SDR) family. As to quaternary structure, homodimer.

It catalyses the reaction a primary alcohol + NAD(+) = an aldehyde + NADH + H(+). The enzyme catalyses a secondary alcohol + NAD(+) = a ketone + NADH + H(+). This is Alcohol dehydrogenase (Adh) from Drosophila planitibia (Fruit fly).